The sequence spans 62 residues: Cecropin-D (62 aa).

Residues 1-22 (MNFTKILFFVVACVFAMRTVSA) form the signal peptide. Residues 23 to 24 (AP) constitute a propeptide, removed by a dipeptidylpeptidase. Residue Lys60 is modified to Lysine amide.

The protein belongs to the cecropin family.

The protein resides in the secreted. Cecropins have lytic and antibacterial activity against several Gram-positive and Gram-negative bacteria. The sequence is that of Cecropin-D from Hyalophora cecropia (Cecropia moth).